The chain runs to 376 residues: 3-dehydroquinate synthase (376 aa).

NAD(+) is bound by residues 115–119 (GVIGD), 139–140 (TS), Lys152, and Lys161. Glu194, His256, and His275 together coordinate Zn(2+).

This sequence belongs to the sugar phosphate cyclases superfamily. Dehydroquinate synthase family. Co(2+) serves as cofactor. Requires Zn(2+) as cofactor. The cofactor is NAD(+).

The protein resides in the cytoplasm. The enzyme catalyses 7-phospho-2-dehydro-3-deoxy-D-arabino-heptonate = 3-dehydroquinate + phosphate. Its pathway is metabolic intermediate biosynthesis; chorismate biosynthesis; chorismate from D-erythrose 4-phosphate and phosphoenolpyruvate: step 2/7. Its function is as follows. Catalyzes the conversion of 3-deoxy-D-arabino-heptulosonate 7-phosphate (DAHP) to dehydroquinate (DHQ). The protein is 3-dehydroquinate synthase of Rhizobium johnstonii (strain DSM 114642 / LMG 32736 / 3841) (Rhizobium leguminosarum bv. viciae).